A 644-amino-acid chain; its full sequence is 1-deoxy-D-xylulose-5-phosphate synthase (644 aa).

Thiamine diphosphate contacts are provided by residues His-78 and 120–122 (GHA). Mg(2+) is bound at residue Asp-149. Thiamine diphosphate is bound by residues 150–151 (AA), Asn-178, and Glu-373. Asn-178 lines the Mg(2+) pocket.

This sequence belongs to the transketolase family. DXPS subfamily. Homodimer. Mg(2+) serves as cofactor. The cofactor is thiamine diphosphate.

The catalysed reaction is D-glyceraldehyde 3-phosphate + pyruvate + H(+) = 1-deoxy-D-xylulose 5-phosphate + CO2. It functions in the pathway metabolic intermediate biosynthesis; 1-deoxy-D-xylulose 5-phosphate biosynthesis; 1-deoxy-D-xylulose 5-phosphate from D-glyceraldehyde 3-phosphate and pyruvate: step 1/1. Functionally, catalyzes the acyloin condensation reaction between C atoms 2 and 3 of pyruvate and glyceraldehyde 3-phosphate to yield 1-deoxy-D-xylulose-5-phosphate (DXP). In Chlamydia caviae (strain ATCC VR-813 / DSM 19441 / 03DC25 / GPIC) (Chlamydophila caviae), this protein is 1-deoxy-D-xylulose-5-phosphate synthase.